The primary structure comprises 397 residues: Serine protease MT3772 (397 aa).

A run of 4 helical transmembrane segments spans residues 9 to 29 (IAVL…GALG), 32 to 52 (LSFG…PHIV), 62 to 82 (LFAA…AGVV), and 102 to 122 (VIGV…LAMP). Cys214 and Cys395 are disulfide-bonded. Catalysis depends on His235, which acts as the Proton acceptor. Asp264 is an active-site residue. Catalysis depends on Ser343, which acts as the Charge relay system.

It belongs to the peptidase S1C family. Monomer.

The protein resides in the membrane. Its function is as follows. Required for M.tuberculosis resistance to oxidative stress in addition to its role in resistance to acid, which is essential for virulence. The chain is Serine protease MT3772 from Mycobacterium tuberculosis (strain CDC 1551 / Oshkosh).